Consider the following 142-residue polypeptide: Hemoglobin subunit alpha (142 aa).

Positions 2 to 142 (VLSPADKTNV…VSTVLTSKYR (141 aa)) constitute a Globin domain. The residue at position 4 (Ser4) is a Phosphoserine. Lys8 is subject to N6-succinyllysine. Thr9 is modified (phosphothreonine). Lys12 bears the N6-succinyllysine mark. The residue at position 17 (Lys17) is an N6-acetyllysine; alternate. Lys17 is subject to N6-succinyllysine; alternate. Tyr25 carries the phosphotyrosine modification. Ser36 carries the phosphoserine modification. Lys41 carries the post-translational modification N6-succinyllysine. Ser50 is subject to Phosphoserine. His59 contributes to the O2 binding site. Position 88 (His88) interacts with heme b. The residue at position 103 (Ser103) is a Phosphoserine. Thr109 carries the phosphothreonine modification. A phosphoserine mark is found at Ser125 and Ser132. Phosphothreonine is present on residues Thr135 and Thr138. Position 139 is a phosphoserine (Ser139).

Belongs to the globin family. In terms of assembly, heterotetramer of two alpha chains and two beta chains in adult hemoglobin A (HbA); two alpha chains and two delta chains in adult hemoglobin A2 (HbA2); two alpha chains and two epsilon chains in early embryonic hemoglobin Gower-2; two alpha chains and two gamma chains in fetal hemoglobin F (HbF). As to expression, red blood cells.

Its function is as follows. Involved in oxygen transport from the lung to the various peripheral tissues. Hemopressin acts as an antagonist peptide of the cannabinoid receptor CNR1. Hemopressin-binding efficiently blocks cannabinoid receptor CNR1 and subsequent signaling. This Pan paniscus (Pygmy chimpanzee) protein is Hemoglobin subunit alpha (HBA1).